The following is a 100-amino-acid chain: Mitochondrial import inner membrane translocase subunit Tim10 B (100 aa).

The Twin CX3C motif signature appears at 25–49 (CFQRCVPSLHHRALDAEEEACLHSC). 2 disulfides stabilise this stretch: cysteine 25/cysteine 49 and cysteine 29/cysteine 45.

This sequence belongs to the small Tim family. In terms of assembly, component of the TIM22 complex, which core is composed of TIMM22, associated with TIMM10 (TIMM10A and/or TIMM10B), TIMM9, AGK and TIMM29.

It localises to the mitochondrion inner membrane. Functionally, component of the TIM22 complex, a complex that mediates the import and insertion of multi-pass transmembrane proteins into the mitochondrial inner membrane. The TIM22 complex forms a twin-pore translocase that uses the membrane potential as the external driving force. In the TIM22 complex, it may act as a docking point for the soluble 70 kDa complex that guides the target proteins in transit through the aqueous mitochondrial intermembrane space. This chain is Mitochondrial import inner membrane translocase subunit Tim10 B (Timm10b), found in Rattus norvegicus (Rat).